The sequence spans 472 residues: Glutamate--tRNA ligase (472 aa).

A 'HIGH' region motif is present at residues 7–17 (PSPTGFLHVGG). Cys-96, Cys-98, Cys-123, and His-125 together coordinate Zn(2+). Residues 112-129 (ARKEKPRYDGRCRHRSEP) show a composition bias toward basic and acidic residues. Residues 112-134 (ARKEKPRYDGRCRHRSEPPSDQP) form a disordered region. The 'KMSKS' region motif lies at 234-238 (KLSKR). Lys-237 contributes to the ATP binding site.

Belongs to the class-I aminoacyl-tRNA synthetase family. Glutamate--tRNA ligase type 1 subfamily. As to quaternary structure, monomer. Zn(2+) is required as a cofactor.

The protein resides in the cytoplasm. It carries out the reaction tRNA(Glu) + L-glutamate + ATP = L-glutamyl-tRNA(Glu) + AMP + diphosphate. Catalyzes the attachment of glutamate to tRNA(Glu) in a two-step reaction: glutamate is first activated by ATP to form Glu-AMP and then transferred to the acceptor end of tRNA(Glu). The chain is Glutamate--tRNA ligase from Magnetococcus marinus (strain ATCC BAA-1437 / JCM 17883 / MC-1).